The primary structure comprises 688 residues: Glycine--tRNA ligase beta subunit (688 aa).

It belongs to the class-II aminoacyl-tRNA synthetase family. Tetramer of two alpha and two beta subunits.

Its subcellular location is the cytoplasm. It catalyses the reaction tRNA(Gly) + glycine + ATP = glycyl-tRNA(Gly) + AMP + diphosphate. This Haemophilus influenzae (strain ATCC 51907 / DSM 11121 / KW20 / Rd) protein is Glycine--tRNA ligase beta subunit (glyS).